The following is a 383-amino-acid chain: Forkhead box protein I3-B (383 aa).

The segment covering 1-12 has biased composition (polar residues); that stretch reads MTSYESQGQSPT. 3 disordered regions span residues 1–55, 215–277, and 317–348; these read MTSY…YELG, DNGN…PCLS, and TTGFSTFTPSTTVSDWASPLPPPPPMSSSPSH. Low complexity predominate over residues 25-35; the sequence is PPELSLYSDSY. The segment at residues 130 to 224 is a DNA-binding region (fork-head); sequence RPPYSYSALI…DNGNFRRKRK (95 aa). The Nuclear localization signal signature appears at 220–226; sequence RRKRKRK. A compositionally biased stretch (low complexity) spans 234-249; sequence SSSGGNESGDSNGRGS. Residues 250 to 277 show a composition bias toward polar residues; the sequence is PKSQSIDISTSPEKGPSPASTGPSPCLS. The span at 317–330 shows a compositional bias: low complexity; that stretch reads TTGFSTFTPSTTVS.

Expressed in ionocyte precursors.

The protein localises to the nucleus. Its function is as follows. Transcription factor required for epithelial cell differentiation. Involved in specification of skin ionocytes from epidermal precursors. This is Forkhead box protein I3-B from Danio rerio (Zebrafish).